Consider the following 337-residue polypeptide: Dehydrogenase FUB6 (337 aa).

It belongs to the zinc-containing alcohol dehydrogenase family. Quinone oxidoreductase subfamily.

Its pathway is mycotoxin biosynthesis. Dehydrogenase; part of the gene cluster that mediates the biosynthesis of fusaric acid, a mycotoxin with low to moderate toxicity to animals and humans, but with high phytotoxic properties. L-aspartate is suggested as fusaric acid amino acid precursor that is activated and further processed to O-acetyl-L-homoserine by cluster enzymes aspartate kinase FUB3 and homoserine O-acetyltransferase FUB5, as well as enzymes of the primary metabolism. The polyketide synthase (PKS) FUB1 generates the triketide trans-2-hexenal which is presumptively released by the hydrolase FUB4 and linked to the NRPS-bound amino acid precursor by NAD(P)-dependent dehydrogenase FUB6. FUB1, FUB4, and the non-canonical NRPS Fub8 may form an enzyme complex. Further processing of the NRPS-bound intermediate might be carried out by FUB6 and the O-acetylhomoserine FUB7, enabling a spontaneous electrocyclization to close the carbon backbone of fusaric acid. Dihydrofusaric acid is likely to be released via reduction by the thioester reductase (TR) domain of FUB8 whereupon the final oxidation to fusaric acid may (also) be performed by the FMN-dependent dehydrogenase FUB9. In Gibberella fujikuroi (strain CBS 195.34 / IMI 58289 / NRRL A-6831) (Bakanae and foot rot disease fungus), this protein is Dehydrogenase FUB6.